The following is a 405-amino-acid chain: L-rhamnonate dehydratase (405 aa).

Residues H33 and R59 each coordinate substrate. Mg(2+) contacts are provided by D226, E252, and E280. H329 (proton acceptor) is an active-site residue. Position 349 (E349) interacts with substrate.

This sequence belongs to the mandelate racemase/muconate lactonizing enzyme family. RhamD subfamily. Homooctamer; tetramer of dimers. Requires Mg(2+) as cofactor.

The enzyme catalyses L-rhamnonate = 2-dehydro-3-deoxy-L-rhamnonate + H2O. Catalyzes the dehydration of L-rhamnonate to 2-keto-3-deoxy-L-rhamnonate (KDR). This is L-rhamnonate dehydratase from Escherichia coli O9:H4 (strain HS).